Reading from the N-terminus, the 325-residue chain is Casein kinase I isoform alpha (325 aa).

A2 is modified (N-acetylalanine). S4 is subject to Phosphoserine. K8 is modified (N6-acetyllysine). One can recognise a Protein kinase domain in the interval 17–285 (YKLVRKIGSG…YLRQLFRILF (269 aa)). ATP-binding positions include 23–31 (IGSGSFGDI) and K46. Catalysis depends on D136, which acts as the Proton acceptor. I156 is modified (phosphoserine).

It belongs to the protein kinase superfamily. CK1 Ser/Thr protein kinase family. Casein kinase I subfamily. Interacts with the Axin complex. Interacts with TUT1, leading to TUT1 phosphorylation. Interacts with FAM83A, FAM83B, FAM83C, FAM83D, FAM83E, FAM83F, FAM83G and FAM83H (via DUF1669). Interaction with FAM83H recruits CSNK1A1 to keratin filaments. In terms of processing, phosphorylated by MTOR in response to mitogenic stimulation, leading to its activation.

Its subcellular location is the cytoplasm. The protein localises to the cytoskeleton. The protein resides in the microtubule organizing center. It is found in the centrosome. It localises to the chromosome. Its subcellular location is the centromere. The protein localises to the kinetochore. The protein resides in the nucleus speckle. It is found in the cilium basal body. It localises to the spindle. It carries out the reaction L-seryl-[protein] + ATP = O-phospho-L-seryl-[protein] + ADP + H(+). The enzyme catalyses L-threonyl-[protein] + ATP = O-phospho-L-threonyl-[protein] + ADP + H(+). Functionally, casein kinases are operationally defined by their preferential utilization of acidic proteins such as caseins as substrates. Can phosphorylate a large number of proteins. Participates in Wnt signaling. Phosphorylates CTNNB1 at 'Ser-45'. May phosphorylate PER1 and PER2. May play a role in segregating chromosomes during mitosis. May play a role in keratin cytoskeleton disassembly and thereby, it may regulate epithelial cell migration. Acts as a positive regulator of mTORC1 and mTORC2 signaling in response to nutrients by mediating phosphorylation of DEPTOR inhibitor. Acts as an inhibitor of NLRP3 inflammasome assembly by mediating phosphorylation of NLRP3. The protein is Casein kinase I isoform alpha (Csnk1a1) of Rattus norvegicus (Rat).